We begin with the raw amino-acid sequence, 310 residues long: Bis(hydroxyethyl) terephthalate hydrolase (310 aa).

The segment at residues M1 to A48 is a signal peptide (tat-type signal). F111 is a binding site for bis(2-hydroxyethyl) terephthalate. S179 functions as the Nucleophile in the catalytic mechanism. 2 residues coordinate bis(2-hydroxyethyl) terephthalate: M180 and W204. Catalysis depends on charge relay system residues D225 and H257. Residues C290 and C306 are joined by a disulfide bond.

Belongs to the AB hydrolase superfamily. Predicted to be exported by the Tat system. The position of the signal peptide cleavage has not been experimentally proven.

The protein localises to the secreted. The catalysed reaction is bis(2-hydroxyethyl) terephthalate + H2O = 4-[(2-hydroxyethoxy)carbonyl]benzoate + ethylene glycol + H(+). Functionally, catalyzes the degradation of bis(hydroxyethyl) terephthalate (BHET), a derived-oligomer of the plastic poly(ethylene terephthalate) (PET), hydrolyzing BHET to mono(2-hydroxyethyl) terephthalate (MHET). Shows no activity against PET. This is Bis(hydroxyethyl) terephthalate hydrolase from Streptomyces coelicolor (strain ATCC BAA-471 / A3(2) / M145).